The chain runs to 608 residues: Elongation factor 4 (608 aa).

One can recognise a tr-type G domain in the interval Asp-11–Ser-193. GTP contacts are provided by residues Asp-23–Thr-28 and Asn-140–Asp-143.

It belongs to the TRAFAC class translation factor GTPase superfamily. Classic translation factor GTPase family. LepA subfamily.

It is found in the cell membrane. It carries out the reaction GTP + H2O = GDP + phosphate + H(+). Functionally, required for accurate and efficient protein synthesis under certain stress conditions. May act as a fidelity factor of the translation reaction, by catalyzing a one-codon backward translocation of tRNAs on improperly translocated ribosomes. Back-translocation proceeds from a post-translocation (POST) complex to a pre-translocation (PRE) complex, thus giving elongation factor G a second chance to translocate the tRNAs correctly. Binds to ribosomes in a GTP-dependent manner. This Anoxybacillus flavithermus (strain DSM 21510 / WK1) protein is Elongation factor 4.